Reading from the N-terminus, the 258-residue chain is Acetylglutamate kinase (258 aa).

Substrate is bound by residues 44-45 (GG), Arg-66, and Asn-158. ATP is bound by residues 181 to 186 (DVSGIL) and 209 to 211 (IIT).

This sequence belongs to the acetylglutamate kinase family. ArgB subfamily. As to quaternary structure, homodimer.

It localises to the cytoplasm. The enzyme catalyses N-acetyl-L-glutamate + ATP = N-acetyl-L-glutamyl 5-phosphate + ADP. It functions in the pathway amino-acid biosynthesis; L-arginine biosynthesis; N(2)-acetyl-L-ornithine from L-glutamate: step 2/4. Its function is as follows. Catalyzes the ATP-dependent phosphorylation of N-acetyl-L-glutamate. The sequence is that of Acetylglutamate kinase from Shigella flexneri serotype 5b (strain 8401).